A 396-amino-acid polypeptide reads, in one-letter code: Trypacidin cluster transcription factor (396 aa).

The zn(2)-C6 fungal-type DNA-binding region spans 20-47 (CRACGLSKVRCSKEKPTCSRCRRRGTVC). 3 disordered regions span residues 54–120 (RPGR…LSTV), 190–218 (DPAP…ESEA), and 346–365 (MHGA…PAPL). Basic and acidic residues predominate over residues 57–71 (RKPDSRSEVEPEPGH). A compositionally biased stretch (low complexity) spans 72-82 (LSHPLPSPESS).

In terms of tissue distribution, specifically expressed in conidia.

The protein resides in the nucleus. Transcription factor that regulates the expression of the gene clusters that mediate the biosynthesis of trypacidin, a metabolite with antiprotozoal activity and a possible role in the infection process. Trypacidin is toxic for human pulmonary and bronchial epithelial cells by initiating the intracellular formation of nitric oxide (NO) and hydrogen peroxide (H(2)O(2)), thus triggering host necrotic cell death. The protein is Trypacidin cluster transcription factor of Aspergillus fumigatus (strain ATCC MYA-4609 / CBS 101355 / FGSC A1100 / Af293) (Neosartorya fumigata).